We begin with the raw amino-acid sequence, 559 residues long: Probable alpha-(1-&gt;6)-mannopyranosyltransferase MSMEG_3120/MSMEI_3041 (559 aa).

12 consecutive transmembrane segments (helical) span residues 41–61 (FGAT…ARPV), 81–101 (VSLT…LMLG), 202–222 (IVEA…LIVW), 247–267 (LLFM…GLML), 300–316 (WQPM…IAMS), 321–340 (LPSL…RWGG), 355–375 (ISLA…GWLF), 386–406 (WMSP…LLGL), 419–439 (AIGV…VLRG), 455–475 (VLLF…PLAA), 480–500 (PGFR…GPTA), and 507–527 (LFQI…LIAL). Pro residues predominate over residues 535 to 548 (RPAPEPPARPPEQP). A disordered region spans residues 535 to 559 (RPAPEPPARPPEQPAPADDAYAESP).

This sequence belongs to the MptA/B family.

It localises to the membrane. In terms of biological role, catalyzes the addition of alpha-(1-&gt;6)-mannose residue. The sequence is that of Probable alpha-(1-&gt;6)-mannopyranosyltransferase MSMEG_3120/MSMEI_3041 from Mycolicibacterium smegmatis (strain ATCC 700084 / mc(2)155) (Mycobacterium smegmatis).